The primary structure comprises 484 residues: Sodium-dependent glucose transporter 1 (484 aa).

Ser6 carries the post-translational modification Phosphoserine. A run of 12 helical transmembrane segments spans residues 40–60, 80–100, 106–126, 135–155, 168–188, 227–247, 274–294, 317–337, 340–360, 366–386, 401–421, and 428–448; these read WFTT…AAVL, EIFV…GVLF, FLLL…TPFC, MMSI…VLIL, ALHF…KLAW, LLWA…FLFA, ALLC…VTYG, SIFW…ATLL, GTMM…LVLF, CLWI…PSGI, AFIL…SGIL, and LPVI…LFPV.

Belongs to the major facilitator superfamily. In terms of tissue distribution, expressed in brain, liver, lung, and kidney. In kidney expressed in cortex and inner medulla, in ascending thin limbs (ATLs) and lower descending thin limbs (DTLs). Primarily expressed in the proximal tubules of the kidney.

It is found in the apical cell membrane. May function as a sodium-dependent glucose transporter. Potential channels for urea in the inner medulla of kidney. The protein is Sodium-dependent glucose transporter 1 of Rattus norvegicus (Rat).